The chain runs to 526 residues: Threonine synthase 1, chloroplastic (526 aa).

The N-terminal 40 residues, 1–40 (MASSCLFNASVSSLNPKQDPIRRHRSTSLLRHRPVVISCT), are a transit peptide targeting the chloroplast. Residues 142–144 (PYG), 165–167 (SAF), Asn-172, Leu-173, Lys-181, and Asn-187 contribute to the S-adenosyl-L-methionine site. Lys-203 is subject to N6-(pyridoxal phosphate)lysine. Residues 335–339 (GNLGN) and Thr-472 each bind pyridoxal 5'-phosphate.

Belongs to the threonine synthase family. As to quaternary structure, homodimer. Pyridoxal 5'-phosphate is required as a cofactor.

It is found in the plastid. It localises to the chloroplast. The catalysed reaction is O-phospho-L-homoserine + H2O = L-threonine + phosphate. It participates in amino-acid biosynthesis; L-threonine biosynthesis; L-threonine from L-aspartate: step 5/5. Its activity is regulated as follows. Allosterically activated by S-adenosyl-L-methionine (SAM). Activated by S-adenosyl-L-ethionine, 5'-amino-5'-deoxyadenosine, sinefungin and 5'-deoxy-5-methylthioadenosine. Inhibited by AMP. In terms of biological role, catalyzes the gamma-elimination of phosphate from L-phosphohomoserine and the beta-addition of water to produce L-threonine. This is Threonine synthase 1, chloroplastic (TS1) from Arabidopsis thaliana (Mouse-ear cress).